Here is a 122-residue protein sequence, read N- to C-terminus: uncharacterized protein (122 aa).

This is an uncharacterized protein from Escherichia coli O157:H7.